A 159-amino-acid chain; its full sequence is NAD(P)H-quinone oxidoreductase subunit J, chloroplastic (159 aa).

It belongs to the complex I 30 kDa subunit family. NDH is composed of at least 16 different subunits, 5 of which are encoded in the nucleus.

The protein localises to the plastid. The protein resides in the chloroplast thylakoid membrane. The enzyme catalyses a plastoquinone + NADH + (n+1) H(+)(in) = a plastoquinol + NAD(+) + n H(+)(out). It carries out the reaction a plastoquinone + NADPH + (n+1) H(+)(in) = a plastoquinol + NADP(+) + n H(+)(out). Functionally, NDH shuttles electrons from NAD(P)H:plastoquinone, via FMN and iron-sulfur (Fe-S) centers, to quinones in the photosynthetic chain and possibly in a chloroplast respiratory chain. The immediate electron acceptor for the enzyme in this species is believed to be plastoquinone. Couples the redox reaction to proton translocation, and thus conserves the redox energy in a proton gradient. The protein is NAD(P)H-quinone oxidoreductase subunit J, chloroplastic of Oryza nivara (Indian wild rice).